The sequence spans 79 residues: D-alanyl carrier protein (79 aa).

Residues 2-79 (AEFKEQVLDI…MVIKKLEEIR (78 aa)) enclose the Carrier domain. An O-(pantetheine 4'-phosphoryl)serine modification is found at S37.

It belongs to the DltC family. Post-translationally, 4'-phosphopantetheine is transferred from CoA to a specific serine of apo-DCP.

It is found in the cytoplasm. It participates in cell wall biogenesis; lipoteichoic acid biosynthesis. Its function is as follows. Carrier protein involved in the D-alanylation of lipoteichoic acid (LTA). The loading of thioester-linked D-alanine onto DltC is catalyzed by D-alanine--D-alanyl carrier protein ligase DltA. The DltC-carried D-alanyl group is further transferred to cell membrane phosphatidylglycerol (PG) by forming an ester bond, probably catalyzed by DltD. D-alanylation of LTA plays an important role in modulating the properties of the cell wall in Gram-positive bacteria, influencing the net charge of the cell wall. This chain is D-alanyl carrier protein, found in Bacillus anthracis (strain CDC 684 / NRRL 3495).